The following is a 430-amino-acid chain: MKEQHNALQLMMLGLQHMLAMYAGAILVPLIVGAAIGLNAGQLTYLIAIDLFMCGAATLLQLWRNRYFGIGLPVVLGCTFTAVGPMISIGSTYGVPAIYGAIIAAGLIVVLAAGFFGKLVRFFPPVVTGSVVMIIGISLIPTAMNNLAGGEGSKEFGSLDNVLLGFGVTAFILLLFYFFKGFIRSIAILLGLIAGTAAAYFMGKVDFSEVLEASWLHVPSLFYFGPPTFELPAVVTMLLVAIVSLVESTGVYFALADITNRRLSEKDLEKGYRAEGLAILLGGLFNAFPYTAFSQNVGIVQLSKMKSVNVIAITGIILVAIGLVPKAAALTTVIPTPVLGGAMIVMFGMVISYGIKMLSSVDLDSQGNLLIIASSVSLGLGATTVPALFSSLSGAASVLAGSGIVIGSLTAIALHAFFQTKQPNSADIKT.

Helical transmembrane passes span 18–38 (MLAMYAGAILVPLIVGAAIGL), 43–63 (LTYLIAIDLFMCGAATLLQLW), 67–87 (YFGIGLPVVLGCTFTAVGPMI), 97–117 (AIYGAIIAAGLIVVLAAGFFG), 122–142 (FFPPVVTGSVVMIIGISLIPT), 163–183 (LLGFGVTAFILLLFYFFKGFI), 185–205 (SIAILLGLIAGTAAAYFMGKV), 209–229 (EVLEASWLHVPSLFYFGPPTF), 233–253 (AVVTMLLVAIVSLVESTGVYF), 274–294 (AEGLAILLGGLFNAFPYTAFS), 310–330 (VIAITGIILVAIGLVPKAAAL), 333–353 (VIPTPVLGGAMIVMFGMVISY), 369–389 (LLIIASSVSLGLGATTVPALF), and 398–418 (VLAGSGIVIGSLTAIALHAFF).

It belongs to the nucleobase:cation symporter-2 (NCS2) (TC 2.A.40) family.

The protein localises to the cell membrane. Functionally, uptake of uric acid. In Bacillus subtilis (strain 168), this protein is Uric acid permease PucK (pucK).